Reading from the N-terminus, the 338-residue chain is Putative clathrin assembly protein At5g10410 (338 aa).

One can recognise an ENTH domain in the interval Phe-27–Pro-157.

Its subcellular location is the membrane. It localises to the clathrin-coated pit. The protein localises to the golgi apparatus. It is found in the cytoplasmic vesicle. The protein resides in the clathrin-coated vesicle. The protein is Putative clathrin assembly protein At5g10410 of Arabidopsis thaliana (Mouse-ear cress).